We begin with the raw amino-acid sequence, 312 residues long: Acetyl-coenzyme A carboxylase carboxyl transferase subunit alpha (312 aa).

In terms of domain architecture, CoA carboxyltransferase C-terminal spans 36–286; it reads RLEKEVKSIY…KEYFLDALRT (251 aa).

The protein belongs to the AccA family. As to quaternary structure, acetyl-CoA carboxylase is a heterohexamer composed of biotin carboxyl carrier protein (AccB), biotin carboxylase (AccC) and two subunits each of ACCase subunit alpha (AccA) and ACCase subunit beta (AccD).

Its subcellular location is the cytoplasm. It catalyses the reaction N(6)-carboxybiotinyl-L-lysyl-[protein] + acetyl-CoA = N(6)-biotinyl-L-lysyl-[protein] + malonyl-CoA. It participates in lipid metabolism; malonyl-CoA biosynthesis; malonyl-CoA from acetyl-CoA: step 1/1. Component of the acetyl coenzyme A carboxylase (ACC) complex. First, biotin carboxylase catalyzes the carboxylation of biotin on its carrier protein (BCCP) and then the CO(2) group is transferred by the carboxyltransferase to acetyl-CoA to form malonyl-CoA. The chain is Acetyl-coenzyme A carboxylase carboxyl transferase subunit alpha from Helicobacter pylori (strain P12).